The sequence spans 393 residues: Probable acetyl-CoA acyltransferase (393 aa).

The active-site Acyl-thioester intermediate is Cys88. Catalysis depends on proton acceptor residues His349 and Cys378.

The protein belongs to the thiolase-like superfamily. Thiolase family.

It is found in the cytoplasm. The catalysed reaction is 2 acetyl-CoA = acetoacetyl-CoA + CoA. The chain is Probable acetyl-CoA acyltransferase from Staphylococcus aureus (strain bovine RF122 / ET3-1).